Here is a 412-residue protein sequence, read N- to C-terminus: CinA-like protein (412 aa).

The protein belongs to the CinA family.

The chain is CinA-like protein from Salinibacter ruber (strain DSM 13855 / M31).